Here is a 304-residue protein sequence, read N- to C-terminus: Signal recognition particle receptor FtsY (304 aa).

GTP contacts are provided by residues G109 to T116, D191 to R195, and T255 to D258.

It belongs to the GTP-binding SRP family. FtsY subfamily. In terms of assembly, part of the signal recognition particle protein translocation system, which is composed of SRP and FtsY. In terms of processing, sensitive to endogenous proteolytic cleavage between residues 18 and 19 and between residues 86 and 87.

The protein resides in the cell membrane. It localises to the cytoplasm. It catalyses the reaction GTP + H2O = GDP + phosphate + H(+). In terms of biological role, involved in targeting and insertion of nascent membrane proteins into the cytoplasmic membrane. Acts as a receptor for the complex formed by the signal recognition particle (SRP) and the ribosome-nascent chain (RNC). The polypeptide is Signal recognition particle receptor FtsY (Thermus aquaticus).